The chain runs to 276 residues: Putative serine/threonine-protein kinase R436 (276 aa).

Residues 6–266 (YSLDKLIQNR…IKQKLNHFKT (261 aa)) form the Protein kinase domain. ATP contacts are provided by residues 12–20 (IQNRKSKRI) and Lys-35. Asp-132 (proton acceptor) is an active-site residue.

This sequence belongs to the protein kinase superfamily. Ser/Thr protein kinase family.

It catalyses the reaction L-seryl-[protein] + ATP = O-phospho-L-seryl-[protein] + ADP + H(+). The enzyme catalyses L-threonyl-[protein] + ATP = O-phospho-L-threonyl-[protein] + ADP + H(+). This is Putative serine/threonine-protein kinase R436 from Acanthamoeba polyphaga (Amoeba).